A 1022-amino-acid polypeptide reads, in one-letter code: MGRGTGHDQYELAATSEGGRKKKRDKKKKDMDDLKKEVDLDDHKLTLDELHRKYGTDLTRGLTSSRAAEILARDGPNALTPPPTTPEWVKFCRQLFGGFSMLLWIGAILCFLAYGIQAASEDEPANDNLYLGVVLSAVVIITGCFSYYQEAKSSRIMDSFKNLVPQQALVIRDGEKKCINAEEVVAGDLVEVKGGDRIPADLRVASAQGCKVDNSSLTGESEPQTRSPDFSNENPLETRNIAFFSTNCVEGTARGVVINTGDRTVMGRIATLASSLEVGRTPISIEIEHFIHIITGVAVFLGVSFFILSLILGYAWLEAVIFLIGIIVANVPEGLLATVTVCLTLTAKRMAKKNCLVKNLEAVETLGSTSTICSDKTGTLTQNRMTVAHMWFDNQIHEADTTENQSGTSFDRSSATWAALARIAGLCNRAVFLAEQSNVPILKRDVAGDASESALLKCIELCCGSVNDMRDKHVKIAEIPFNSTNKYQLSIHKNANSEESKHLLVMKGAPERILDRCSTIMIHGKEQPLDDEMKDAFQNAYVELGGLGERVLGFCHYFLPDDQFAEGFQFDTEEVNFPTENLCFIGLMSMIDPPRAAVLDAVGKCRSPGIKVIMVTGDHPITAKAIAKGVGIISEGNETVEDIAARLNIPINEVNPRDAKACVVHGGELKDLTPEQLDDILKHHTEIVFARTSPQQKLIIVEGCQRQGAIVAVTGDGVNDSPALKKADIGVAMGIAGSDVSKQAADMILLDDNFASIVTGVEEGRLIFDNLKKSIAYTLTSNIPEITPFLLFIIANIPLPLGTVTILCIDLGTDMVPAISLAYEAAESDIMKRQPRNPRTDKLVNERLISIAYGQIGMMQATAGFFTYFVILAENGFLPSTLLGIRVKWDDKYVNDLEDSYGQQWTYEQRKIVEYTCHTSFFASIVIVQWADLIICKTRRNSIIQQGMKNKILIFGLFEETALAAFLSYCPGMDVALRMYPLKPSWWFCAFPYSLLIFLYDEARRFILRRNPDGWVERETYY.

Positions 1 to 5 are excised as a propeptide; sequence MGRGT. A compositionally biased stretch (basic and acidic residues) spans 1–10; sequence MGRGTGHDQY. Positions 1 to 34 are disordered; the sequence is MGRGTGHDQYELAATSEGGRKKKRDKKKKDMDDL. Residues 6–86 lie on the Cytoplasmic side of the membrane; sequence GHDQYELAAT…NALTPPPTTP (81 aa). Ser16 is modified (phosphoserine; by PKC). The tract at residues 81–83 is interaction with phosphoinositide-3 kinase; it reads PPP. The helical transmembrane segment at 87–107 threads the bilayer; sequence EWVKFCRQLFGGFSMLLWIGA. The Extracellular portion of the chain corresponds to 108-130; sequence ILCFLAYGIQAASEDEPANDNLY. Residues 131–151 traverse the membrane as a helical segment; it reads LGVVLSAVVIITGCFSYYQEA. At 152–287 the chain is on the cytoplasmic side; it reads KSSRIMDSFK…VGRTPISIEI (136 aa). The disordered stretch occupies residues 213-234; sequence DNSSLTGESEPQTRSPDFSNEN. A helical transmembrane segment spans residues 288 to 307; the sequence is EHFIHIITGVAVFLGVSFFI. Residues 308-319 are Extracellular-facing; that stretch reads LSLILGYAWLEA. Residues 320–337 traverse the membrane as a helical segment; it reads VIFLIGIIVANVPEGLLA. Residues 338–771 are Cytoplasmic-facing; that stretch reads TVTVCLTLTA…EEGRLIFDNL (434 aa). Catalysis depends on Asp375, which acts as the 4-aspartylphosphate intermediate. Residue Lys486 coordinates ATP. Residues Asp716 and Asp720 each coordinate Mg(2+). Residues 772 to 791 traverse the membrane as a helical segment; sequence KKSIAYTLTSNIPEITPFLL. Topologically, residues 792–801 are extracellular; it reads FIIANIPLPL. A helical transmembrane segment spans residues 802 to 822; that stretch reads GTVTILCIDLGTDMVPAISLA. Residues 823 to 842 are Cytoplasmic-facing; that stretch reads YEAAESDIMKRQPRNPRTDK. The helical transmembrane segment at 843-865 threads the bilayer; the sequence is LVNERLISIAYGQIGMMQATAGF. At 866–917 the chain is on the extracellular side; that stretch reads FTYFVILAENGFLPSTLLGIRVKWDDKYVNDLEDSYGQQWTYEQRKIVEYTC. A helical transmembrane segment spans residues 918-937; sequence HTSFFASIVIVQWADLIICK. Residues 938–950 lie on the Cytoplasmic side of the membrane; that stretch reads TRRNSIIQQGMKN. Ser942 carries the phosphoserine; by PKA modification. A helical transmembrane segment spans residues 951–969; sequence KILIFGLFEETALAAFLSY. Residues 970 to 984 lie on the Extracellular side of the membrane; sequence CPGMDVALRMYPLKP. The chain crosses the membrane as a helical span at residues 985–1005; sequence SWWFCAFPYSLLIFLYDEARR. Over 1006–1022 the chain is Cytoplasmic; the sequence is FILRRNPDGWVERETYY.

It belongs to the cation transport ATPase (P-type) (TC 3.A.3) family. Type IIC subfamily. As to quaternary structure, the sodium/potassium-transporting ATPase is composed of a catalytic alpha subunit, an auxiliary non-catalytic beta subunit and an additional regulatory subunit.

The protein resides in the cell membrane. It localises to the sarcolemma. The enzyme catalyses K(+)(out) + Na(+)(in) + ATP + H2O = K(+)(in) + Na(+)(out) + ADP + phosphate + H(+). Its function is as follows. This is the catalytic component of the active enzyme, which catalyzes the hydrolysis of ATP coupled with the exchange of sodium and potassium ions across the plasma membrane. This action creates the electrochemical gradient of sodium and potassium ions, providing the energy for active transport of various nutrients. In Anguilla anguilla (European freshwater eel), this protein is Sodium/potassium-transporting ATPase subunit alpha-1 (atp1a1).